We begin with the raw amino-acid sequence, 328 residues long: Phosphate acyltransferase (328 aa).

It belongs to the PlsX family. Homodimer. Probably interacts with PlsY.

It localises to the cytoplasm. The catalysed reaction is a fatty acyl-[ACP] + phosphate = an acyl phosphate + holo-[ACP]. Its pathway is lipid metabolism; phospholipid metabolism. Catalyzes the reversible formation of acyl-phosphate (acyl-PO(4)) from acyl-[acyl-carrier-protein] (acyl-ACP). This enzyme utilizes acyl-ACP as fatty acyl donor, but not acyl-CoA. In Staphylococcus aureus (strain bovine RF122 / ET3-1), this protein is Phosphate acyltransferase.